The primary structure comprises 383 residues: Protein salvador homolog 1 (383 aa).

Phosphoserine occurs at positions 94 and 136. 2 WW domains span residues 199-232 (LPLP…HPLE) and 234-267 (EGLP…HPCA). Residue Thr210 is modified to Phosphothreonine. Residues 321-368 (ILKWELFQLADLDTYQGMLKLLFMKELEQIVKMYEAYRQALLTELENR) enclose the SARAH domain. The stretch at 344 to 373 (MKELEQIVKMYEAYRQALLTELENRKQRQQ) forms a coiled coil.

Homodimer. Stabilized through interaction with STK3/MST2 or STK4/MST1. Interacts (via SARAH domain) with isoform 1 of NEK2. Interacts with ESR1 only in the presence of STK3/MST2. Interacts with WTIP and AJUBA. Post-translationally, phosphorylated by STK3/MST2 and STK4/MST1. Phosphorylation is not required for SAV1 stability and may increase the number of protein binding sites on the scaffold molecule. In terms of tissue distribution, ubiquitously expressed in adult tissues with highest expression in the pancreas, aorta and interventricular septum and lowest expression in skeletal muscle. Expression was higher in fetal than in the adult heart. Expressed in various cell lines.

It localises to the nucleus. The protein localises to the cytoplasm. Regulator of STK3/MST2 and STK4/MST1 in the Hippo signaling pathway which plays a pivotal role in organ size control and tumor suppression by restricting proliferation and promoting apoptosis. The core of this pathway is composed of a kinase cascade wherein STK3/MST2 and STK4/MST1, in complex with its regulatory protein SAV1, phosphorylates and activates LATS1/2 in complex with its regulatory protein MOB1, which in turn phosphorylates and inactivates YAP1 oncoprotein and WWTR1/TAZ. Phosphorylation of YAP1 by LATS1/2 inhibits its translocation into the nucleus to regulate cellular genes important for cell proliferation, cell death, and cell migration. SAV1 is required for STK3/MST2 and STK4/MST1 activation and promotes cell-cycle exit and terminal differentiation in developing epithelial tissues. Plays a role in centrosome disjunction by regulating the localization of NEK2 to centrosomes, and its ability to phosphorylate CROCC and CEP250. In conjunction with STK3/MST2, activates the transcriptional activity of ESR1 through the modulation of its phosphorylation. The sequence is that of Protein salvador homolog 1 from Homo sapiens (Human).